We begin with the raw amino-acid sequence, 338 residues long: 1-aminocyclopropane-1-carboxylate deaminase (338 aa).

Lys-51 carries the N6-(pyridoxal phosphate)lysine modification. The Nucleophile role is filled by Ser-78.

This sequence belongs to the ACC deaminase/D-cysteine desulfhydrase family. In terms of assembly, homotrimer. Pyridoxal 5'-phosphate serves as cofactor.

It carries out the reaction 1-aminocyclopropane-1-carboxylate + H2O = 2-oxobutanoate + NH4(+). Catalyzes a cyclopropane ring-opening reaction, the irreversible conversion of 1-aminocyclopropane-1-carboxylate (ACC) to ammonia and alpha-ketobutyrate. Allows growth on ACC as a nitrogen source. The protein is 1-aminocyclopropane-1-carboxylate deaminase of Burkholderia pseudomallei (strain 1710b).